Here is a 447-residue protein sequence, read N- to C-terminus: Tubulin beta-5 chain (447 aa).

GTP contacts are provided by glutamine 11, glutamate 69, serine 138, glycine 142, threonine 143, glycine 144, asparagine 204, and asparagine 226. Glutamate 69 contributes to the Mg(2+) binding site. Residues 424-447 (QYQDATAEEEGEFDEDEELDDAMG) are disordered. Over residues 429–447 (TAEEEGEFDEDEELDDAMG) the composition is skewed to acidic residues.

The protein belongs to the tubulin family. As to quaternary structure, dimer of alpha and beta chains. A typical microtubule is a hollow water-filled tube with an outer diameter of 25 nm and an inner diameter of 15 nM. Alpha-beta heterodimers associate head-to-tail to form protofilaments running lengthwise along the microtubule wall with the beta-tubulin subunit facing the microtubule plus end conferring a structural polarity. Microtubules usually have 13 protofilaments but different protofilament numbers can be found in some organisms and specialized cells. Mg(2+) serves as cofactor.

It localises to the cytoplasm. Its subcellular location is the cytoskeleton. In terms of biological role, tubulin is the major constituent of microtubules, a cylinder consisting of laterally associated linear protofilaments composed of alpha- and beta-tubulin heterodimers. Microtubules grow by the addition of GTP-tubulin dimers to the microtubule end, where a stabilizing cap forms. Below the cap, tubulin dimers are in GDP-bound state, owing to GTPase activity of alpha-tubulin. The protein is Tubulin beta-5 chain (TUBB5) of Ectocarpus variabilis (Brown alga).